The following is a 288-amino-acid chain: ATP phosphoribosyltransferase (288 aa).

The protein belongs to the ATP phosphoribosyltransferase family. Long subfamily. Mg(2+) serves as cofactor.

It localises to the cytoplasm. The enzyme catalyses 1-(5-phospho-beta-D-ribosyl)-ATP + diphosphate = 5-phospho-alpha-D-ribose 1-diphosphate + ATP. Its pathway is amino-acid biosynthesis; L-histidine biosynthesis; L-histidine from 5-phospho-alpha-D-ribose 1-diphosphate: step 1/9. Its activity is regulated as follows. Feedback inhibited by histidine. Its function is as follows. Catalyzes the condensation of ATP and 5-phosphoribose 1-diphosphate to form N'-(5'-phosphoribosyl)-ATP (PR-ATP). Has a crucial role in the pathway because the rate of histidine biosynthesis seems to be controlled primarily by regulation of HisG enzymatic activity. This is ATP phosphoribosyltransferase from Methanococcus maripaludis (strain C6 / ATCC BAA-1332).